The primary structure comprises 54 residues: Ovomucoid (54 aa).

The region spanning Val-4–Cys-54 is the Kazal-like domain. 3 cysteine pairs are disulfide-bonded: Cys-6–Cys-36, Cys-14–Cys-33, and Cys-22–Cys-54. N-linked (GlcNAc...) asparagine glycosylation occurs at Asn-43.

The protein resides in the secreted. This is Ovomucoid from Rhea americana (Greater rhea).